We begin with the raw amino-acid sequence, 229 residues long: Potassium/proton antiporter CemA (229 aa).

A run of 3 helical transmembrane segments spans residues 7–27, 106–126, and 193–213; these read LTPF…SLSF, LILH…YSIL, and LVST…FLFL.

It belongs to the CemA family.

The protein resides in the plastid. The protein localises to the chloroplast inner membrane. It carries out the reaction K(+)(in) + H(+)(out) = K(+)(out) + H(+)(in). In terms of biological role, contributes to K(+)/H(+) antiport activity by supporting proton efflux to control proton extrusion and homeostasis in chloroplasts in a light-dependent manner to modulate photosynthesis. Prevents excessive induction of non-photochemical quenching (NPQ) under continuous-light conditions. Indirectly promotes efficient inorganic carbon uptake into chloroplasts. This Illicium oligandrum (Star anise) protein is Potassium/proton antiporter CemA.